A 451-amino-acid polypeptide reads, in one-letter code: Tubulin alpha-1B chain (451 aa).

Residues 1-4 (MREC) carry the MREC motif motif. 4 residues coordinate GTP: G10, Q11, A12, and Q15. K40 bears the N6,N6,N6-trimethyllysine; alternate mark. An N6-acetyllysine; alternate modification is found at K40. S48 is modified (phosphoserine). GTP contacts are provided by E71, A99, S140, G143, G144, T145, G146, T179, E183, N206, Y224, and N228. E71 provides a ligand contact to Mg(2+). Phosphoserine is present on S232. L252 contributes to the GTP binding site. E254 is a catalytic residue. The residue at position 282 (Y282) is a 3'-nitrotyrosine. K326 participates in a covalent cross-link: Glycyl lysine isopeptide (Lys-Gly) (interchain with G-Cter in ubiquitin). R339 carries the omega-N-methylarginine modification. K370 participates in a covalent cross-link: Glycyl lysine isopeptide (Lys-Gly) (interchain with G-Cter in ubiquitin). A disordered region spans residues 432–451 (YEEVGVDSVEGEGEEEGEEY). Residue S439 is modified to Phosphoserine. 5-glutamyl polyglutamate is present on residues E443 and E445. Position 451 is a 3'-nitrotyrosine (Y451).

It belongs to the tubulin family. Heterodimer of alpha- and beta-tubulin. A typical microtubule is a hollow water-filled tube with an outer diameter of 25 nm and an inner diameter of 15 nM. Alpha-beta heterodimers associate head-to-tail to form protofilaments running lengthwise along the microtubule wall with the beta-tubulin subunit facing the microtubule plus end conferring a structural polarity. Microtubules usually have 13 protofilaments but different protofilament numbers can be found in some organisms and specialized cells. Interacts with gamma-tubulin; the interaction allows microtubules to nucleate from the gamma-tubulin ring complex (gTuRC). Nascent microtubule interacts (via alpha-tubulin MREC motif) with TTC5/STRAP; this interaction may result in tubulin mRNA-targeted degradation. Component of sperm flagellar doublet microtubules. Mg(2+) serves as cofactor. Some glutamate residues at the C-terminus are polyglutamylated, resulting in polyglutamate chains on the gamma-carboxyl group. Polyglutamylation plays a key role in microtubule severing by spastin (SPAST). SPAST preferentially recognizes and acts on microtubules decorated with short polyglutamate tails: severing activity by SPAST increases as the number of glutamates per tubulin rises from one to eight, but decreases beyond this glutamylation threshold. Glutamylation is also involved in cilia motility. In terms of processing, some glutamate residues at the C-terminus are monoglycylated but not polyglycylated due to the absence of functional TTLL10 in human. Monoglycylation is mainly limited to tubulin incorporated into cilia and flagella axonemes, which is required for their stability and maintenance. Flagella glycylation controls sperm motility. Both polyglutamylation and monoglycylation can coexist on the same protein on adjacent residues, and lowering glycylation levels increases polyglutamylation, and reciprocally. Post-translationally, acetylation of alpha chains at Lys-40 is located inside the microtubule lumen. This modification has been correlated with increased microtubule stability, intracellular transport and ciliary assembly. Methylation of alpha chains at Lys-40 is found in mitotic microtubules and is required for normal mitosis and cytokinesis contributing to genomic stability. In terms of processing, nitration of Tyr-451 is irreversible and interferes with normal dynein intracellular distribution. Post-translationally, undergoes a tyrosination/detyrosination cycle, the cyclic removal and re-addition of a C-terminal tyrosine residue by the enzymes tubulin tyrosine carboxypeptidase (MATCAP1/KIAA0895L, VASH1 or VASH2) and tubulin tyrosine ligase (TTL), respectively. Tyrosination promotes microtubule interaction with CAP-Gly domain-containing proteins such as CLIP1, CLIP2 and DCTN1. Tyrosination regulates the initiation of dynein-dynactin motility via interaction with DCTN1, which brings the dynein-dynactin complex into contact with microtubules. In neurons, tyrosinated tubulins mediate the initiation of retrograde vesicle transport. In terms of processing, detyrosination is involved in metaphase plate congression by guiding chromosomes during mitosis: detyrosination promotes interaction with CENPE, promoting pole-proximal transport of chromosomes toward the equator. Detyrosination increases microtubules-dependent mechanotransduction in dystrophic cardiac and skeletal muscle. In cardiomyocytes, detyrosinated microtubules are required to resist to contractile compression during contraction: detyrosination promotes association with desmin (DES) at force-generating sarcomeres, leading to buckled microtubules and mechanical resistance to contraction.

Its subcellular location is the cytoplasm. It localises to the cytoskeleton. It catalyses the reaction GTP + H2O = GDP + phosphate + H(+). Tubulin is the major constituent of microtubules, protein filaments consisting of alpha- and beta-tubulin heterodimers. Microtubules grow by the addition of GTP-tubulin dimers to the microtubule end, where a stabilizing cap forms. Below the cap, tubulin dimers are in GDP-bound state, owing to GTPase activity of alpha-tubulin. In Homo sapiens (Human), this protein is Tubulin alpha-1B chain (TUBA1B).